Reading from the N-terminus, the 480-residue chain is MTAETLIASLQLSMPELILAVGAMALLMIGVFSGERATPTVTGLAVAVLIIAGLWLVLKTGEGEAYGGAFLSDPFAKFMKVLALIGSITVMVMTVGHARSAQIDRFEFPVLLVLATLGMLLMISANDLISLYLSLELQSLALYVVAAINRDSVRSTEAGLKYFVLGALSSGMMLYGMSLVYGFTGHTGFDEIAAALTAEGRSLGLVFGLVFILAGLAFKISAVPFHMWTPDVYEGAPTPVTAFFAAGPKVAAISILVRIVINAFEPVVADWQQIIVFISIASMLLGSFAAIGQRNIKRLMAYSSIGHMGYALVGLAAGSMAGVRGVILYMLIYMVMTLGTFACILAMRRREGEHVEGIDDLAGLSQTNPFMATVLTILMFSLAGIPPLAGFFAKYFVFVAAIEAQLYGLAIIGVLASVVGAYYYLRVIKVMWFEEPRGEFARTAGELRLVFGLSGLFVLGYVLIGGPLGTAAEAAARTFF.

The next 14 membrane-spanning stretches (helical) occupy residues 12–32 (LSMP…IGVF), 38–58 (TPTV…WLVL), 78–98 (FMKV…VGHA), 106–126 (FEFP…ISAN), 128–148 (LISL…VAAI), 163–183 (FVLG…VYGF), 203–223 (LGLV…ISAV), 241–261 (TAFF…RIVI), 271–291 (WQQI…FAAI), 303–323 (SSIG…MAGV), 326–346 (VILY…CILA), 372–392 (ATVL…AGFF), 396–416 (FVFV…GVLA), and 449–469 (LVFG…GPLG).

It belongs to the complex I subunit 2 family. NDH-1 is composed of 14 different subunits. Subunits NuoA, H, J, K, L, M, N constitute the membrane sector of the complex.

It localises to the cell inner membrane. It carries out the reaction a quinone + NADH + 5 H(+)(in) = a quinol + NAD(+) + 4 H(+)(out). Functionally, NDH-1 shuttles electrons from NADH, via FMN and iron-sulfur (Fe-S) centers, to quinones in the respiratory chain. The immediate electron acceptor for the enzyme in this species is believed to be ubiquinone. Couples the redox reaction to proton translocation (for every two electrons transferred, four hydrogen ions are translocated across the cytoplasmic membrane), and thus conserves the redox energy in a proton gradient. This chain is NADH-quinone oxidoreductase subunit N 1, found in Rhizobium meliloti (strain 1021) (Ensifer meliloti).